Here is a 549-residue protein sequence, read N- to C-terminus: Dihydroxy-acid dehydratase (549 aa).

Aspartate 78 is a Mg(2+) binding site. Cysteine 119 contributes to the [2Fe-2S] cluster binding site. The Mg(2+) site is built by aspartate 120 and lysine 121. Lysine 121 bears the N6-carboxylysine mark. [2Fe-2S] cluster is bound at residue cysteine 191. Glutamate 441 serves as a coordination point for Mg(2+). The Proton acceptor role is filled by serine 466.

This sequence belongs to the IlvD/Edd family. As to quaternary structure, homodimer. [2Fe-2S] cluster serves as cofactor. It depends on Mg(2+) as a cofactor.

The enzyme catalyses (2R)-2,3-dihydroxy-3-methylbutanoate = 3-methyl-2-oxobutanoate + H2O. The catalysed reaction is (2R,3R)-2,3-dihydroxy-3-methylpentanoate = (S)-3-methyl-2-oxopentanoate + H2O. It functions in the pathway amino-acid biosynthesis; L-isoleucine biosynthesis; L-isoleucine from 2-oxobutanoate: step 3/4. Its pathway is amino-acid biosynthesis; L-valine biosynthesis; L-valine from pyruvate: step 3/4. Functions in the biosynthesis of branched-chain amino acids. Catalyzes the dehydration of (2R,3R)-2,3-dihydroxy-3-methylpentanoate (2,3-dihydroxy-3-methylvalerate) into 2-oxo-3-methylpentanoate (2-oxo-3-methylvalerate) and of (2R)-2,3-dihydroxy-3-methylbutanoate (2,3-dihydroxyisovalerate) into 2-oxo-3-methylbutanoate (2-oxoisovalerate), the penultimate precursor to L-isoleucine and L-valine, respectively. The polypeptide is Dihydroxy-acid dehydratase (Methanosphaera stadtmanae (strain ATCC 43021 / DSM 3091 / JCM 11832 / MCB-3)).